The following is a 360-amino-acid chain: Histidinol-phosphate aminotransferase (360 aa).

An N6-(pyridoxal phosphate)lysine modification is found at lysine 221.

This sequence belongs to the class-II pyridoxal-phosphate-dependent aminotransferase family. Histidinol-phosphate aminotransferase subfamily. As to quaternary structure, homodimer. The cofactor is pyridoxal 5'-phosphate.

The catalysed reaction is L-histidinol phosphate + 2-oxoglutarate = 3-(imidazol-4-yl)-2-oxopropyl phosphate + L-glutamate. The protein operates within amino-acid biosynthesis; L-histidine biosynthesis; L-histidine from 5-phospho-alpha-D-ribose 1-diphosphate: step 7/9. The sequence is that of Histidinol-phosphate aminotransferase from Desulfitobacterium hafniense (strain Y51).